Reading from the N-terminus, the 114-residue chain is Superoxide dismutase [Cu-Zn] (114 aa).

The Cu cation site is built by H37, H39, and H54. Positions 54, 62, 71, and 74 each coordinate Zn(2+). The tract at residues H54 to A80 is disordered. A compositionally biased stretch (basic and acidic residues) spans N59–G73. H111 serves as a coordination point for Cu cation.

The protein belongs to the Cu-Zn superoxide dismutase family. As to quaternary structure, homodimer. Cu cation serves as cofactor. It depends on Zn(2+) as a cofactor.

Its subcellular location is the cytoplasm. It catalyses the reaction 2 superoxide + 2 H(+) = H2O2 + O2. Functionally, destroys radicals which are normally produced within the cells and which are toxic to biological systems. This is Superoxide dismutase [Cu-Zn] from Drosophila tolteca (Fruit fly).